A 953-amino-acid polypeptide reads, in one-letter code: Coatomer subunit beta (953 aa).

The residue at position 2 (T2) is an N-acetylthreonine. 6 HEAT repeats span residues 96–131, 132–168, 240–276, 277–314, 316–353, and 396–433; these read HEMI…KEAE, LLEP…NFEH, SERA…SAPT, AIKA…HPAH, RVLQ…SRNV, and DMAA…RFDN. Position 494 is an N6-acetyllysine (K494).

As to quaternary structure, oligomeric complex that consists of at least the alpha, beta, beta', gamma, delta, epsilon and zeta subunits. Interacts with SCYL1. Interacts with COPG1. Interacts (via trunk domain) with ARF1 (via switch I region); the interaction is direct. Interacts with KCNK2/TREK (via N-terminus); this interaction increases the channel-mediated whole cell currents and promotes plasma membrane expression of KCNK2/TREK. Interacts with anthrax lethal factor (LF); this interaction may facilitate endosomal vesicle membrane translocation of LF and its release from the lumen of endosomal vesicles to external milieu. Interacts with CAPN8 and PRKCE. Interacts with ARF1 (myristoylated); this interaction is required for binding of COPB1 to Golgi membranes. Interacts with STX17. Interacts with TMEM115. Interacts with HLA-G-B2M complex; this interaction mediates the endoplasmic reticulum (ER) retrieval of HLA-E-B2M complexes that bind low affinity peptides. Interacts with TMEM41B. (Microbial infection) Interacts (via C-terminus) with HIV-1 Nef; the interaction is direct. Proteolytically cleaved between Ser-528 and Ser-529 by CAPN8.

It is found in the cytoplasm. Its subcellular location is the golgi apparatus membrane. The protein resides in the cytoplasmic vesicle. The protein localises to the COPI-coated vesicle membrane. It localises to the cell membrane. It is found in the endoplasmic reticulum-Golgi intermediate compartment. The coatomer is a cytosolic protein complex that binds to dilysine motifs and reversibly associates with Golgi non-clathrin-coated vesicles, which further mediate biosynthetic protein transport from the ER, via the Golgi up to the trans Golgi network. Coatomer complex is required for budding from Golgi membranes, and is essential for the retrograde Golgi-to-ER transport of dilysine-tagged proteins. In mammals, the coatomer can only be recruited by membranes associated to ADP-ribosylation factors (ARFs), which are small GTP-binding proteins; the complex also influences the Golgi structural integrity, as well as the processing, activity, and endocytic recycling of LDL receptors. Plays a functional role in facilitating the transport of kappa-type opioid receptor mRNAs into axons and enhances translation of these proteins. Required for limiting lipid storage in lipid droplets. Involved in lipid homeostasis by regulating the presence of perilipin family members PLIN2 and PLIN3 at the lipid droplet surface and promoting the association of adipocyte surface triglyceride lipase (PNPLA2) with the lipid droplet to mediate lipolysis. Involved in the Golgi disassembly and reassembly processes during cell cycle. Involved in autophagy by playing a role in early endosome function. Plays a role in organellar compartmentalization of secretory compartments including endoplasmic reticulum (ER)-Golgi intermediate compartment (ERGIC), Golgi, trans-Golgi network (TGN) and recycling endosomes, and in biosynthetic transport of CAV1. Promotes degradation of Nef cellular targets CD4 and MHC class I antigens by facilitating their trafficking to degradative compartments. This is Coatomer subunit beta from Homo sapiens (Human).